We begin with the raw amino-acid sequence, 98 residues long: Integration host factor subunit alpha (98 aa).

The interval 54 to 74 (LRDKASRPGRNPKTGENIPVS) is disordered.

The protein belongs to the bacterial histone-like protein family. As to quaternary structure, heterodimer of an alpha and a beta chain.

Functionally, this protein is one of the two subunits of integration host factor, a specific DNA-binding protein that functions in genetic recombination as well as in transcriptional and translational control. This is Integration host factor subunit alpha from Actinobacillus succinogenes (strain ATCC 55618 / DSM 22257 / CCUG 43843 / 130Z).